A 139-amino-acid polypeptide reads, in one-letter code: S-adenosylmethionine decarboxylase proenzyme (139 aa).

The active-site Schiff-base intermediate with substrate; via pyruvic acid is the Ser63. Position 63 is a pyruvic acid (Ser); by autocatalysis (Ser63). His68 acts as the Proton acceptor; for processing activity in catalysis. Cys83 (proton donor; for catalytic activity) is an active-site residue.

This sequence belongs to the prokaryotic AdoMetDC family. Type 1 subfamily. In terms of assembly, heterotetramer of two alpha and two beta chains arranged as a dimer of alpha/beta heterodimers. Pyruvate serves as cofactor. Post-translationally, is synthesized initially as an inactive proenzyme. Formation of the active enzyme involves a self-maturation process in which the active site pyruvoyl group is generated from an internal serine residue via an autocatalytic post-translational modification. Two non-identical subunits are generated from the proenzyme in this reaction, and the pyruvate is formed at the N-terminus of the alpha chain, which is derived from the carboxyl end of the proenzyme. The post-translation cleavage follows an unusual pathway, termed non-hydrolytic serinolysis, in which the side chain hydroxyl group of the serine supplies its oxygen atom to form the C-terminus of the beta chain, while the remainder of the serine residue undergoes an oxidative deamination to produce ammonia and the pyruvoyl group blocking the N-terminus of the alpha chain.

The catalysed reaction is S-adenosyl-L-methionine + H(+) = S-adenosyl 3-(methylsulfanyl)propylamine + CO2. It functions in the pathway amine and polyamine biosynthesis; S-adenosylmethioninamine biosynthesis; S-adenosylmethioninamine from S-adenosyl-L-methionine: step 1/1. Catalyzes the decarboxylation of S-adenosylmethionine to S-adenosylmethioninamine (dcAdoMet), the propylamine donor required for the synthesis of the polyamines spermine and spermidine from the diamine putrescine. The polypeptide is S-adenosylmethionine decarboxylase proenzyme (Pyrococcus abyssi (strain GE5 / Orsay)).